A 366-amino-acid chain; its full sequence is Protein BIG GRAIN 1-like B (366 aa).

Disordered regions lie at residues Asp-42 to Arg-73 and Phe-129 to Ser-148. Positions Gln-56–Arg-73 are enriched in basic and acidic residues.

Belongs to the BIG GRAIN 1 (BG1) plant protein family.

It is found in the cell membrane. Its function is as follows. Involved in auxin transport. Regulator of the auxin signaling pathway. This Arabidopsis thaliana (Mouse-ear cress) protein is Protein BIG GRAIN 1-like B.